We begin with the raw amino-acid sequence, 323 residues long: ATP synthase gamma chain (323 aa).

Belongs to the ATPase gamma chain family. F-type ATPases have 2 components, CF(1) - the catalytic core - and CF(0) - the membrane proton channel. CF(1) has five subunits: alpha(3), beta(3), gamma(1), delta(1), epsilon(1). CF(0) has three main subunits: a, b and c.

Its subcellular location is the cell inner membrane. In terms of biological role, produces ATP from ADP in the presence of a proton gradient across the membrane. The gamma chain is believed to be important in regulating ATPase activity and the flow of protons through the CF(0) complex. This Rickettsia africae (strain ESF-5) protein is ATP synthase gamma chain.